The chain runs to 881 residues: Band 4.1-like protein 1 (881 aa).

M1 carries the N-acetylmethionine modification. Positions 1-88 (MTTETGPDSE…TPSKAQKSPQ (88 aa)) are disordered. The segment covering 17 to 35 (EAPQQPEAAAAVTTPVTPA) has biased composition (low complexity). T30 is subject to Phosphothreonine. Basic and acidic residues predominate over residues 38-50 (GHPEANSNEKHPS). Position 75 is a phosphoserine (S75). The segment covering 76–87 (ERTTPSKAQKSP) has biased composition (polar residues). The residue at position 79 (T79) is a Phosphothreonine. Residues 97 to 378 (AICRVTLLDA…EHHTFFRLVS (282 aa)) enclose the FERM domain. Y343 is modified (phosphotyrosine). S378, S430, and S437 each carry phosphoserine. The tract at residues 428–501 (SRSLDGAEFS…HKQEFLDKPE (74 aa)) is disordered. Residues 444–457 (ENHDAGPDGDKRDE) are compositionally biased toward basic and acidic residues. Residues S461 and S466 each carry the phosphoserine modification. A compositionally biased stretch (basic and acidic residues) spans 466-501 (SEAEEGEVRTPTKIKELKPEQETTPRHKQEFLDKPE). Phosphothreonine is present on T475. A spectrin--actin-binding region spans residues 483–541 (KPEQETTPRHKQEFLDKPEDVLLKHQASINELKRTLKEPNSKLIHRDRDWERERRLPSS). S510 is modified (phosphoserine). Positions 514–538 (LKRTLKEPNSKLIHRDRDWERERRL) are enriched in basic and acidic residues. The disordered stretch occupies residues 514–596 (LKRTLKEPNS…QERDTVFLKD (83 aa)). A phosphoserine mark is found at S540, S541, S544, and S546. A Phosphothreonine modification is found at T550. The span at 550 to 577 (TPEKANERAGLREGSEEKVKPPRPRAPE) shows a compositional bias: basic and acidic residues. Residues S564 and S578 each carry the phosphoserine modification. T580 carries the phosphothreonine modification. S639, S648, S650, S667, S672, S678, and S685 each carry phosphoserine. The tract at residues 642 to 699 (ELDRDKSDSDTEGLLFSRDLNKGAPSQDDESGGIEDSPDRGACSTPDMPQFEPVKTET) is disordered. T686 bears the Phosphothreonine mark. Phosphoserine occurs at positions 722, 784, and 870. Residues 746 to 881 (SITTETISTT…EERDKKPQES (136 aa)) form a C-terminal (CTD) region.

In terms of assembly, interacts with AGAP2. In terms of tissue distribution, highest expression in brain, lower in heart, kidney, pancreas, placenta, lung and skeletal muscle.

The protein localises to the cytoplasm. It is found in the cytoskeleton. May function to confer stability and plasticity to neuronal membrane via multiple interactions, including the spectrin-actin-based cytoskeleton, integral membrane channels and membrane-associated guanylate kinases. This Homo sapiens (Human) protein is Band 4.1-like protein 1.